The primary structure comprises 232 residues: Ubiquinone biosynthesis O-methyltransferase (232 aa).

The S-adenosyl-L-methionine site is built by arginine 36, glycine 55, aspartate 76, and leucine 120.

Belongs to the methyltransferase superfamily. UbiG/COQ3 family.

It carries out the reaction a 3-demethylubiquinol + S-adenosyl-L-methionine = a ubiquinol + S-adenosyl-L-homocysteine + H(+). It catalyses the reaction a 3-(all-trans-polyprenyl)benzene-1,2-diol + S-adenosyl-L-methionine = a 2-methoxy-6-(all-trans-polyprenyl)phenol + S-adenosyl-L-homocysteine + H(+). Its pathway is cofactor biosynthesis; ubiquinone biosynthesis. Functionally, O-methyltransferase that catalyzes the 2 O-methylation steps in the ubiquinone biosynthetic pathway. The sequence is that of Ubiquinone biosynthesis O-methyltransferase from Pseudomonas entomophila (strain L48).